Consider the following 70-residue polypeptide: UPF0270 protein VS_2853 (70 aa).

It belongs to the UPF0270 family.

The polypeptide is UPF0270 protein VS_2853 (Vibrio atlanticus (strain LGP32) (Vibrio splendidus (strain Mel32))).